The primary structure comprises 191 residues: Ferric nitrobindin-like protein (191 aa).

A GXWXGXG motif is present at residues 20–26; it reads GDWAGAG.

This sequence belongs to the nitrobindin family.

This is Ferric nitrobindin-like protein from Streptomyces coelicolor (strain ATCC BAA-471 / A3(2) / M145).